The primary structure comprises 95 residues: Protein TusB (95 aa).

The protein belongs to the DsrH/TusB family. In terms of assembly, heterohexamer, formed by a dimer of trimers. The hexameric TusBCD complex contains 2 copies each of TusB, TusC and TusD. The TusBCD complex interacts with TusE.

Its subcellular location is the cytoplasm. In terms of biological role, part of a sulfur-relay system required for 2-thiolation of 5-methylaminomethyl-2-thiouridine (mnm(5)s(2)U) at tRNA wobble positions. The protein is Protein TusB of Serratia proteamaculans (strain 568).